The following is a 1755-amino-acid chain: Transposon Ty1-MR1 Gag-Pol polyprotein (1755 aa).

Composition is skewed to polar residues over residues 1–31 (MESQ…TTQD), 46–60 (VSTQ…TPLS), and 137–168 (VGTH…TNQH). 3 disordered regions span residues 1–88 (MESQ…YPQQ), 137–174 (VGTH…PPPI), and 350–420 (QQES…IRGS). The RNA-binding stretch occupies residues 299–401 (NNGIPINNKV…NSQSRTARAH (103 aa)). Basic and acidic residues predominate over residues 363–372 (SPSDEKKDSR). Residues 373–411 (TYTNTTKPKSITRNSQKPNNSQSRTARAHNVSTFNNSPG) show a composition bias toward polar residues. D461 serves as the catalytic For protease activity; shared with dimeric partner. Residues 583-640 (NVHTSESTRKYPYPFIHRMLAHANAQTIRYSLKNNTITYFNESDVDWSSAIDYQCPDC) are integrase-type zinc finger-like. In terms of domain architecture, Integrase catalytic spans 660–835 (NSYEPFQYLH…AGLDISTLLP (176 aa)). The Mg(2+) site is built by D671 and D736. The tract at residues 958–1172 (AVSPTDSTPP…LGGIGDSNAY (215 aa)) is disordered. Over residues 960-969 (SPTDSTPPST) the composition is skewed to low complexity. A compositionally biased stretch (polar residues) spans 1005–1015 (STPQISDIEST). A compositionally biased stretch (basic and acidic residues) spans 1038–1053 (ESSHASKSKDFRHSDS). 2 stretches are compositionally biased toward polar residues: residues 1054 to 1082 (YSDN…QTSE) and 1095 to 1106 (SIDTSSSESNSL). Residues 1178-1212 (KKRSLEDNETEIKVSRDTWNTKNMRSLEPPRSKKR) carry the Bipartite nuclear localization signal motif. The Reverse transcriptase Ty1/copia-type domain occupies 1338–1476 (NNYYITQLDI…DILGLEIKYQ (139 aa)). Mg(2+) contacts are provided by D1346, D1427, D1428, D1610, E1652, and D1685. Residues 1610 to 1752 (DASYGNQPYY…IKTFKLLTNK (143 aa)) enclose the RNase H Ty1/copia-type domain.

As to quaternary structure, the capsid protein forms a homotrimer, from which the VLPs are assembled. The protease is a homodimer, whose active site consists of two apposed aspartic acid residues. In terms of processing, initially, virus-like particles (VLPs) are composed of the structural unprocessed proteins Gag and Gag-Pol, and also contain the host initiator methionine tRNA (tRNA(i)-Met) which serves as a primer for minus-strand DNA synthesis, and a dimer of genomic Ty RNA. Processing of the polyproteins occurs within the particle and proceeds by an ordered pathway, called maturation. First, the protease (PR) is released by autocatalytic cleavage of the Gag-Pol polyprotein yielding capsid protein p45 and a Pol-p154 precursor protein. This cleavage is a prerequisite for subsequent processing of Pol-p154 at the remaining sites to release the mature structural and catalytic proteins. Maturation takes place prior to the RT reaction and is required to produce transposition-competent VLPs.

Its subcellular location is the cytoplasm. It localises to the nucleus. The enzyme catalyses DNA(n) + a 2'-deoxyribonucleoside 5'-triphosphate = DNA(n+1) + diphosphate. The catalysed reaction is Endonucleolytic cleavage to 5'-phosphomonoester.. Functionally, capsid protein (CA) is the structural component of the virus-like particle (VLP), forming the shell that encapsulates the retrotransposons dimeric RNA genome. The particles are assembled from trimer-clustered units and there are holes in the capsid shells that allow for the diffusion of macromolecules. CA also has nucleocapsid-like chaperone activity, promoting primer tRNA(i)-Met annealing to the multipartite primer-binding site (PBS), dimerization of Ty1 RNA and initiation of reverse transcription. In terms of biological role, the aspartyl protease (PR) mediates the proteolytic cleavages of the Gag and Gag-Pol polyproteins after assembly of the VLP. Reverse transcriptase/ribonuclease H (RT) is a multifunctional enzyme that catalyzes the conversion of the retro-elements RNA genome into dsDNA within the VLP. The enzyme displays a DNA polymerase activity that can copy either DNA or RNA templates, and a ribonuclease H (RNase H) activity that cleaves the RNA strand of RNA-DNA heteroduplexes during plus-strand synthesis and hydrolyzes RNA primers. The conversion leads to a linear dsDNA copy of the retrotransposon that includes long terminal repeats (LTRs) at both ends. Its function is as follows. Integrase (IN) targets the VLP to the nucleus, where a subparticle preintegration complex (PIC) containing at least integrase and the newly synthesized dsDNA copy of the retrotransposon must transit the nuclear membrane. Once in the nucleus, integrase performs the integration of the dsDNA into the host genome. The polypeptide is Transposon Ty1-MR1 Gag-Pol polyprotein (TY1B-MR1) (Saccharomyces cerevisiae (strain ATCC 204508 / S288c) (Baker's yeast)).